We begin with the raw amino-acid sequence, 1833 residues long: Proteasome activator complex subunit 4A (1833 aa).

HEAT repeat units follow at residues 460-504 and 983-1022; these read PEGP…LVDC and NFCC…NHSG. A disordered region spans residues 1095–1122; sequence SSSPEPNPGAASEQEELEGRKREEQKNK. The segment covering 1111 to 1122 has biased composition (basic and acidic residues); sequence LEGRKREEQKNK. HEAT repeat units lie at residues 1164 to 1202, 1344 to 1382, 1626 to 1664, and 1670 to 1708; these read LPLP…QLKR, DAFL…GSKH, SDQI…YNLF, and AKAV…CNFL. Residues 1640-1728 are bromodomain-like (BRDL); the sequence is SRSSSWHARY…ESLSKTRLPK (89 aa).

Belongs to the BLM10 family. As to quaternary structure, homodimer. Interacts with the 20S and 26S proteasomes.

The protein localises to the cytoplasm. Its subcellular location is the cytosol. The protein resides in the nucleus. It localises to the nucleus speckle. Its function is as follows. Associated component of the proteasome that specifically recognizes acetylated histones and promotes ATP- and ubiquitin-independent degradation of core histones during DNA damage response. Recognizes and binds acetylated histones via its bromodomain-like (BRDL) region and activates the proteasome by opening the gated channel for substrate entry. Binds to the core proteasome via its C-terminus, which occupies the same binding sites as the proteasomal ATPases, opening the closed structure of the proteasome via an active gating mechanism. involved in DNA damage response in somatic cells: binds to acetylated histones and promotes degradation of histones. This Danio rerio (Zebrafish) protein is Proteasome activator complex subunit 4A (psme4a).